The following is a 134-amino-acid chain: UPF0715 membrane protein YoaG (134 aa).

The next 4 membrane-spanning stretches (helical) occupy residues 9-29 (LMTLGLSSLTFGLLLGFYSFV), 35-55 (IIALFTAAIALLYGFVVYGLF), 72-92 (VMYLLIYSVVAFIAAFLFFVI), and 106-126 (FYYMLSIAAAVIYWLWDSLIL).

It belongs to the UPF0715 family.

The protein localises to the cell membrane. In Bacillus subtilis (strain 168), this protein is UPF0715 membrane protein YoaG (yoaG).